The following is a 352-amino-acid chain: Protein-glutamate methylesterase/protein-glutamine glutaminase 1 (352 aa).

One can recognise a Response regulatory domain in the interval 5–122 (KVLVVDDSAF…SLDVLSVKEE (118 aa)). Asp56 carries the post-translational modification 4-aspartylphosphate. In terms of domain architecture, CheB-type methylesterase spans 155 to 352 (PDQDRKLNKL…EITEEVLSML (198 aa)). Active-site residues include Ser170, His197, and Asp297.

This sequence belongs to the CheB family. Phosphorylated by CheA. Phosphorylation of the N-terminal regulatory domain activates the methylesterase activity.

The protein resides in the cytoplasm. It carries out the reaction [protein]-L-glutamate 5-O-methyl ester + H2O = L-glutamyl-[protein] + methanol + H(+). The catalysed reaction is L-glutaminyl-[protein] + H2O = L-glutamyl-[protein] + NH4(+). Functionally, involved in chemotaxis. Part of a chemotaxis signal transduction system that modulates chemotaxis in response to various stimuli. Catalyzes the demethylation of specific methylglutamate residues introduced into the chemoreceptors (methyl-accepting chemotaxis proteins or MCP) by CheR. Also mediates the irreversible deamidation of specific glutamine residues to glutamic acid. This chain is Protein-glutamate methylesterase/protein-glutamine glutaminase 1, found in Syntrophomonas wolfei subsp. wolfei (strain DSM 2245B / Goettingen).